A 61-amino-acid polypeptide reads, in one-letter code: Probable tautomerase BA_5626/GBAA_5626/BAS5226 (61 aa).

Residue P2 is the Proton acceptor; via imino nitrogen of the active site.

It belongs to the 4-oxalocrotonate tautomerase family.

This Bacillus anthracis protein is Probable tautomerase BA_5626/GBAA_5626/BAS5226.